The primary structure comprises 670 residues: Probable membrane-anchored ferredoxin csal_0991 (670 aa).

The next 5 helical transmembrane spans lie at 2 to 22 (LDIL…IGAV), 68 to 90 (VATA…LGLA), 94 to 113 (LGWL…LFVA), 135 to 155 (LMAF…VLPA), and 159 to 179 (GWLV…ELVF). 4Fe-4S ferredoxin-type domains follow at residues 241–271 (WNQL…PLNP) and 316–347 (GTAL…HVDA). 8 residues coordinate [4Fe-4S] cluster: Cys250, Cys253, Cys256, Cys260, Cys328, Cys331, Cys334, and Cys338. A disordered region spans residues 648–670 (NTPPATPASHDTAASQATEEVLS). Over residues 659–670 (TAASQATEEVLS) the composition is skewed to polar residues.

Requires [4Fe-4S] cluster as cofactor.

The protein resides in the cell inner membrane. In terms of biological role, participates in the electron transfer process during N,N-dimethylglycine (DMG) degradation to sarcosine. Probably transfers the electrons from N,N-dimethylglycine/sarcosine dehydrogenase (DMGDH) to the electron transfer flavoprotein (ETF) EtfA-EtfB. This is Probable membrane-anchored ferredoxin csal_0991 from Chromohalobacter salexigens (strain ATCC BAA-138 / DSM 3043 / CIP 106854 / NCIMB 13768 / 1H11).